The chain runs to 101 residues: Movement protein (101 aa).

The helical transmembrane segment at 30 to 50 (EVAILSFVALICFYLLYLWVL) threads the bilayer. The tract at residues 75-101 (VDRSNPIPNIPAPPSQGNPGPFVPGTG) is disordered.

This sequence belongs to the mastrevirus movement protein family. Interacts with the capsid protein (CP). Part of a MP-CP-viral DNA complex.

The protein localises to the host membrane. Functionally, involved in the viral transport within, and between cells. The polypeptide is Movement protein (Maize streak virus genotype A (isolate Kenya) (MSV)).